The primary structure comprises 1161 residues: PAN2-PAN3 deadenylation complex catalytic subunit pan2 (1161 aa).

WD repeat units follow at residues 20–59 (GLPTAATTIAFDDVSELLWAGNEFGRITSFYGPELQRYTS) and 276–315 (ANVSFMLGIDISPSGEALAINDAECSIHLWGSPSKIHFNE). The linker stretch occupies residues 316–452 (MSKEVEFADV…GAKLNGEAED (137 aa)). Positions 453–822 (DPLLKYSNVE…SPCILAYQAK (370 aa)) constitute a USP domain. In terms of domain architecture, Exonuclease spans 871-1049 (VALDTEFVDL…IEDARMALRL (179 aa)). 4 residues coordinate a divalent metal cation: Asp874, Glu876, Asp983, and Asp1042. One copy of the WD 4 repeat lies at 1009-1060 (NRRLSLRYLAWAVFKEYIQEEPADNNQGHDSIEDARMALRLWKKFQEYEDAG). Residues 1092–1161 (RPGTAVTMQN…GDFFGGSPLK (70 aa)) are disordered. Residues 1097 to 1110 (VTMQNSSGRNTPST) show a composition bias toward polar residues. Positions 1116 to 1129 (AATATATTSAPATP) are enriched in low complexity. The segment covering 1145–1155 (TFGGPGAGDFF) has biased composition (gly residues).

The protein belongs to the peptidase C19 family. PAN2 subfamily. Forms a heterotrimer with an asymmetric homodimer of the regulatory subunit pan3 to form the poly(A)-nuclease (PAN) deadenylation complex. A divalent metal cation is required as a cofactor.

It is found in the cytoplasm. It catalyses the reaction Exonucleolytic cleavage of poly(A) to 5'-AMP.. Its activity is regulated as follows. Positively regulated by the regulatory subunit pan3. Functionally, catalytic subunit of the poly(A)-nuclease (PAN) deadenylation complex, one of two cytoplasmic mRNA deadenylases involved in mRNA turnover. PAN specifically shortens poly(A) tails of RNA and the activity is stimulated by poly(A)-binding protein pab1. PAN deadenylation is followed by rapid degradation of the shortened mRNA tails by the CCR4-NOT complex. Deadenylated mRNAs are then degraded by two alternative mechanisms, namely exosome-mediated 3'-5' exonucleolytic degradation, or deadenylation-dependent mRNA decaping and subsequent 5'-3' exonucleolytic degradation by xrn1. May also be involved in post-transcriptional maturation of mRNA poly(A) tails. This is PAN2-PAN3 deadenylation complex catalytic subunit pan2 from Neosartorya fischeri (strain ATCC 1020 / DSM 3700 / CBS 544.65 / FGSC A1164 / JCM 1740 / NRRL 181 / WB 181) (Aspergillus fischerianus).